The chain runs to 261 residues: MSESLHLTRNGSILEITLDRPKANAIDAKTSFEMGEVFLNFRDDPQLRVAIITGAGEKFFSAGWDLKAAAEGEAPDADFGPGGFAGLTEIFNLDKPVIAAVNGYAFGGGFELALAADFIVCADNASFALPEAKLGIVPDSGGVLRLPKILPPTIVNEMVMTGRRMGAEEALRWGIVNRVVSQAELMDNARELAQQLVNSAPLAIAALKEIYRTTSEMPVEEAYRYIRSGVLKHYPSVLHSEDAIEGPLAFAEKRDPVWKGR.

The Nucleophile role is filled by Glu-111. Residue Glu-131 is the Proton acceptor of the active site.

This sequence belongs to the enoyl-CoA hydratase/isomerase family.

It catalyses the reaction (R)-carnitinyl-CoA = crotonobetainyl-CoA + H2O. Its pathway is amine and polyamine metabolism; carnitine metabolism. In terms of biological role, catalyzes the reversible dehydration of L-carnitinyl-CoA to crotonobetainyl-CoA. This chain is Carnitinyl-CoA dehydratase, found in Shigella flexneri.